Here is a 1132-residue protein sequence, read N- to C-terminus: DNA-directed RNA polymerase I subunit RPA2 (1132 aa).

The segment at 1067–1098 (CMDCGSLLSPLLEKPPPNWSATRHRKTICLLC) adopts a C4-type zinc-finger fold.

This sequence belongs to the RNA polymerase beta chain family. Component of the RNA polymerase I (Pol I) complex consisting of at least 13 subunits.

The protein localises to the nucleus. It is found in the nucleolus. The protein resides in the chromosome. The enzyme catalyses RNA(n) + a ribonucleoside 5'-triphosphate = RNA(n+1) + diphosphate. In terms of biological role, DNA-dependent RNA polymerase catalyzes the transcription of DNA into RNA using the four ribonucleoside triphosphates as substrates. Second largest core component of RNA polymerase I which synthesizes ribosomal RNA precursors. Proposed to contribute to the polymerase catalytic activity and forms the polymerase active center together with the largest subunit. Pol I is composed of mobile elements and RPA2 is part of the core element with the central large cleft and probably a clamp element that moves to open and close the cleft. This chain is DNA-directed RNA polymerase I subunit RPA2 (polr1b), found in Danio rerio (Zebrafish).